Consider the following 197-residue polypeptide: Probable GTP-binding protein EngB (197 aa).

The EngB-type G domain occupies 22–195 (NLPEIAFVGR…VDYLFDDLVE (174 aa)). Residues 30–37 (GRSNVGKS), 57–61 (GKTRL), 75–78 (DLPG), 142–145 (TKSD), and 174–176 (FSS) contribute to the GTP site. The Mg(2+) site is built by serine 37 and threonine 59.

It belongs to the TRAFAC class TrmE-Era-EngA-EngB-Septin-like GTPase superfamily. EngB GTPase family. Requires Mg(2+) as cofactor.

Its function is as follows. Necessary for normal cell division and for the maintenance of normal septation. This is Probable GTP-binding protein EngB from Clostridium perfringens (strain 13 / Type A).